The primary structure comprises 120 residues: UPF0231 protein YacL (120 aa).

This sequence belongs to the UPF0231 family.

This chain is UPF0231 protein YacL, found in Escherichia coli O6:K15:H31 (strain 536 / UPEC).